The following is a 590-amino-acid chain: Phosphatidylserine decarboxylase proenzyme 1, mitochondrial (590 aa).

The N-terminal 59 residues, 1–59, are a transit peptide targeting the mitochondrion; it reads MPLKPISFRWSKTSVRSVPNPFMYGPDNLNKPLSRASQMAERVHQQTPSSTNYQQRRYF. The Mitochondrial matrix portion of the chain corresponds to 60 to 140; sequence SYYYYQFPKI…GKERRRFIRW (81 aa). Residues 141–159 traverse the membrane as a helical segment; it reads WTVTSLTIVLGGVYAKIKY. Residues 160 to 590 lie on the Mitochondrial intermembrane side of the membrane; it reads ERGDHEENPY…KVGQSLGGFV (431 aa). Residues aspartate 260, histidine 403, and serine 558 each act as charge relay system; for autoendoproteolytic cleavage activity in the active site. The active-site Schiff-base intermediate with substrate; via pyruvic acid; for decarboxylase activity is the serine 558. Serine 558 carries the post-translational modification Pyruvic acid (Ser); by autocatalysis.

The protein belongs to the phosphatidylserine decarboxylase family. PSD-B subfamily. Eukaryotic type I sub-subfamily. In terms of assembly, heterodimer of a large membrane-associated beta subunit and a small pyruvoyl-containing alpha subunit. Requires pyruvate as cofactor. In terms of processing, is synthesized initially as an inactive proenzyme. Formation of the active enzyme involves a self-maturation process in which the active site pyruvoyl group is generated from an internal serine residue via an autocatalytic post-translational modification. Two non-identical subunits are generated from the proenzyme in this reaction, and the pyruvate is formed at the N-terminus of the alpha chain, which is derived from the carboxyl end of the proenzyme. The autoendoproteolytic cleavage occurs by a canonical serine protease mechanism, in which the side chain hydroxyl group of the serine supplies its oxygen atom to form the C-terminus of the beta chain, while the remainder of the serine residue undergoes an oxidative deamination to produce ammonia and the pyruvoyl prosthetic group on the alpha chain. During this reaction, the Ser that is part of the protease active site of the proenzyme becomes the pyruvoyl prosthetic group, which constitutes an essential element of the active site of the mature decarboxylase.

Its subcellular location is the mitochondrion inner membrane. The catalysed reaction is a 1,2-diacyl-sn-glycero-3-phospho-L-serine + H(+) = a 1,2-diacyl-sn-glycero-3-phosphoethanolamine + CO2. Its pathway is phospholipid metabolism; phosphatidylethanolamine biosynthesis; phosphatidylethanolamine from CDP-diacylglycerol: step 2/2. In terms of biological role, catalyzes the formation of phosphatidylethanolamine (PtdEtn) from phosphatidylserine (PtdSer). Plays a central role in phospholipid metabolism and in the interorganelle trafficking of phosphatidylserine. Important for virulence. This Candida albicans (strain SC5314 / ATCC MYA-2876) (Yeast) protein is Phosphatidylserine decarboxylase proenzyme 1, mitochondrial.